A 30-amino-acid polypeptide reads, in one-letter code: Cysteine-rich venom protein annuliferin-a (30 aa).

This sequence belongs to the CRISP family. In terms of processing, contains 8 disulfide bonds. As to expression, expressed by the venom gland.

It is found in the secreted. Inhibits calcium-activated potassium channels (KCa), voltage-gated potassium channel (Kv), and the calcium release channel/ryanodine receptor (RyR). The chain is Cysteine-rich venom protein annuliferin-a from Naja annulifera (Banded Egyptian cobra).